Reading from the N-terminus, the 483-residue chain is Probable apyrase 3 (483 aa).

Over Met1 to Lys29 the chain is Cytoplasmic. The helical; Signal-anchor for type II membrane protein transmembrane segment at Ser30–Phe50 threads the bilayer. The Extracellular segment spans residues Asn51–Phe483. Val72–Arg82 lines the ATP pocket. The active-site Proton acceptor is Glu195. An ATP-binding site is contributed by Gly219–Gln229. N-linked (GlcNAc...) asparagine glycans are attached at residues Asn250, Asn281, Asn305, and Asn326.

It belongs to the GDA1/CD39 NTPase family. Ca(2+) is required as a cofactor. In terms of tissue distribution, expressed in the initiation zone of lateral root and in the lateral root tip, the adaxial junction of lateral shoots with the stems, and in the abscission zone of flower organs. Not expressed in the rosette leaves.

It localises to the membrane. It carries out the reaction a ribonucleoside 5'-triphosphate + 2 H2O = a ribonucleoside 5'-phosphate + 2 phosphate + 2 H(+). Catalyzes the hydrolysis of phosphoanhydride bonds of nucleoside tri- and di-phosphates. This Arabidopsis thaliana (Mouse-ear cress) protein is Probable apyrase 3 (APY3).